The sequence spans 162 residues: Endoribonuclease YbeY (162 aa).

Positions 128, 132, and 138 each coordinate Zn(2+).

The protein belongs to the endoribonuclease YbeY family. Zn(2+) serves as cofactor.

The protein resides in the cytoplasm. In terms of biological role, single strand-specific metallo-endoribonuclease involved in late-stage 70S ribosome quality control and in maturation of the 3' terminus of the 16S rRNA. In Lactococcus lactis subsp. cremoris (strain SK11), this protein is Endoribonuclease YbeY.